A 693-amino-acid chain; its full sequence is Guanyl-specific ribonuclease pgl-3 (693 aa).

An involved in dimerization region spans residues 205-447 (KKLMIEGPKI…VNRIIESLEK (243 aa)). His437 functions as the Proton acceptor in the catalytic mechanism. 3 disordered regions span residues 445–468 (LEKS…GPTT), 523–591 (AEKN…DATP), and 620–693 (SSNG…RGGS). The segment covering 447–468 (KSSSSEPSATAKQTTTSNGPTT) has biased composition (low complexity). Composition is skewed to polar residues over residues 528–548 (NTPS…SPTK) and 569–580 (ITKVSPQPQERT). The required for interaction with sepa-1 stretch occupies residues 581–614 (GTAWGSGDATPVPLATPVNEYKVSGFGAAPVASG). Composition is skewed to gly residues over residues 625-634 (SGRGSYGGGR), 641-660 (RGAY…SRGY), and 668-693 (RGSY…RGGS). Positions 633–693 (GRGGDRGGRG…GFFGGSRGGS (61 aa)) are RNA-binding RGG-box.

In terms of assembly, may form a homodimer. Interacts with pgl-1 and pgl-2; this association is not required for P-granule localization of either pgl-1 or pgl-2. Interacts with sepa-1; the interaction is enhanced in the presence of RNA. Interacts with prmt-1; the interaction is direct. Post-translationally, methylated at arginine residues in the RNA-binding RGG-box by prmt-1. Methylation promotes P-granule degradation by autophagy. Highly expressed in the germline. Expressed in most somatic cells.

The protein localises to the cytoplasmic granule. It carries out the reaction [RNA] containing guanosine + H2O = an [RNA fragment]-3'-guanosine-3'-phosphate + a 5'-hydroxy-ribonucleotide-3'-[RNA fragment].. Functionally, guanyl-specific endoribonuclease which cleaves the phosphodiester bond in single-stranded RNA between the 3'-guanylic residue and the 5'-OH residue of adjacent nucleotide, resulting in the formation of a corresponding 2',3'-cyclic phosphate intermediate. P-granule component involved in germline development. Together with the P-granule component pgl-1, is involved in the formation of P-granules. Together with pgl-1, probably recruits other granule components such as pos-1, mex-3 and glh-1, and RNA to P-granules. In vitro, binds mRNA; this interaction is required for the formation of liquid-like droplets that resemble P-granules. Most likely recruits pgl-1 into P-granules during autophagy. Associates with adapters such as sepa-1 and is required for the accumulation and degradation of P-granules by autophagy in somatic cells. This ensures exclusive localization of the P-granules in germ cells. In addition, may act redundantly with pgl-1 to protect germ cells from excessive germline apoptosis during normal oogenesis and development of the two gonadal arms. This may in part be through regulating the localization of sir-2.1 which is involved in germ cell apoptosis. May protect somatic cells from excessive apoptosis during normal development. In Caenorhabditis elegans, this protein is Guanyl-specific ribonuclease pgl-3.